A 147-amino-acid chain; its full sequence is Large ribosomal subunit protein bL9 (147 aa).

Belongs to the bacterial ribosomal protein bL9 family.

Binds to the 23S rRNA. The protein is Large ribosomal subunit protein bL9 of Campylobacter lari (strain RM2100 / D67 / ATCC BAA-1060).